We begin with the raw amino-acid sequence, 376 residues long: MRYADPSANRDLLGNRTLLFIFICAFALVTLLQQILYGRNYIKRYFEFYEGPFEYNSTRCLELRHEILEVKVLSMVKQSELFDRWKSLQMCKWAMNISEANQFKSTLSRCCNAPAFLFTTQKNTPLGTKLKYEVDTSGIYHINQEIFRMFPKDMPYYRSQFKKCAVVGNGGILKNSRCGREINSADFVFRCNLPPISEKYTMDVGVKTDVVTVNPSIITERFHKLEKWRRPFYRVLQVYENASVLLPAFYNTRNTDVSIRVKYVLDDFESPQAVYYFHPQYLVNVSRYWLSLGVRAKRISTGLILVTAALELCEEVHLFGFWAFPMNPSGLYITHHYYDNVKPRPGFHAMPSEIFNFLHLHSRGILRVHTGTCSCC.

The Cytoplasmic segment spans residues 1–17; the sequence is MRYADPSANRDLLGNRT. The chain crosses the membrane as a helical; Signal-anchor for type II membrane protein span at residues 18 to 38; that stretch reads LLFIFICAFALVTLLQQILYG. The Lumenal portion of the chain corresponds to 39–376; that stretch reads RNYIKRYFEF…RVHTGTCSCC (338 aa). N-linked (GlcNAc...) asparagine glycans are attached at residues asparagine 56 and asparagine 96. Cystine bridges form between cysteine 164/cysteine 313 and cysteine 178/cysteine 373. Substrate is bound by residues asparagine 192 and 214 to 216; that span reads NPS. N-linked (GlcNAc...) asparagine glycans are attached at residues asparagine 241 and asparagine 284. A substrate-binding site is contributed by 300 to 302; the sequence is STG. Histidine 348 functions as the Proton donor/acceptor in the catalytic mechanism.

Belongs to the glycosyltransferase 29 family.

The protein localises to the golgi apparatus membrane. It catalyses the reaction a ganglioside GQ1c (d18:1(4E)) + CMP-N-acetyl-beta-neuraminate = a ganglioside GP1c (d18:1(4E)) + CMP + H(+). The protein operates within protein modification; protein glycosylation. Its function is as follows. Involved in the synthesis of gangliosides GD1c, GT1a, GQ1b, GP1c and GT3 from GD1a, GT1b, GM1b and GD3 respectively. The chain is Alpha-2,8-sialyltransferase 8E (ST8SIA5) from Pan troglodytes (Chimpanzee).